The following is a 921-amino-acid chain: Guanylate kinase-associated protein mars (921 aa).

Phosphoserine is present on Ser-49. Thr-51 is modified (phosphothreonine). 2 positions are modified to phosphoserine: Ser-76 and Ser-170. A Phosphotyrosine modification is found at Tyr-172. 2 disordered regions span residues 179 to 208 and 273 to 325; these read GKGKAAEPIKPSIPKPTSAAAPPSSNTVAA and RPTP…PLGN. Low complexity-rich tracts occupy residues 193 to 208 and 273 to 285; these read KPTSAAAPPSSNTVAA and RPTPATVTKAKTP. Position 444 is a phosphoserine (Ser-444). Positions 500 to 531 are disordered; sequence QTTVKEDTGDSTLVPEGTKTPPRRESNGMPNY. At Thr-519 the chain carries Phosphothreonine. Residue Ser-554 is modified to Phosphoserine. Disordered regions lie at residues 641 to 660 and 743 to 763; these read AGATGKNSQPNDGSEDSKPV and TKVEEPTLEDGLPATSSRHSS. Residues Ser-785 and Ser-792 each carry the phosphoserine modification. 2 disordered regions span residues 809 to 833 and 861 to 921; these read QNAAKTPPPKPRTSILKTPGTTKRQ and ETVG…SEFM. Residue Thr-826 is modified to Phosphothreonine. Residues 878–907 are compositionally biased toward polar residues; that stretch reads EASTESGSLEQNPGRDSNQENEATPRTYTL.

It belongs to the SAPAP family. As to expression, expressed in the central nervous system and at different stages of gametogenesis. In embryos, it is expressed in central nervous system and brain. In testis, it is strongly expressed in pre-meiotic germ cells, but is not found in somatic or post-meiotic cells.

The protein resides in the cell membrane. Its subcellular location is the nucleus. The protein localises to the nucleoplasm. It localises to the cytoplasm. It is found in the cytoskeleton. The protein resides in the spindle. In terms of biological role, cell cycle regulator. This Drosophila melanogaster (Fruit fly) protein is Guanylate kinase-associated protein mars (mars).